Reading from the N-terminus, the 647-residue chain is Beta-galactosidase (647 aa).

Residues 1 to 24 (MLRVPLCTPLPLLALLQLLGAAHG) form the signal peptide. Positions 25-29 (IYNVT) are excised as a propeptide. An N-linked (GlcNAc...) asparagine glycan is attached at asparagine 27. Tyrosine 84, glutamate 130, and asparagine 188 together coordinate substrate. The Proton donor role is filled by glutamate 189. Cysteines 196 and 231 form a disulfide. A glycan (N-linked (GlcNAc...) asparagine) is linked at asparagine 248. Residue glutamate 269 is the Nucleophile of the active site. Tyrosine 334 serves as a coordination point for substrate. N-linked (GlcNAc...) asparagine glycosylation is found at asparagine 500, asparagine 504, asparagine 510, asparagine 544, asparagine 557, and asparagine 617. A disulfide bond links cysteine 628 and cysteine 636.

This sequence belongs to the glycosyl hydrolase 35 family. In terms of assembly, homodimer. May form higher multimers.

The protein resides in the lysosome. The catalysed reaction is Hydrolysis of terminal non-reducing beta-D-galactose residues in beta-D-galactosides.. Cleaves beta-linked terminal galactosyl residues from gangliosides, glycoproteins, and glycosaminoglycans. The chain is Beta-galactosidase (Glb1) from Mus musculus (Mouse).